The sequence spans 659 residues: Nicastrin (659 aa).

Residues 1 to 22 (MKIKNYFIIVFIIIVLSTDVIS) form the signal peptide. Residues 23–627 (SQSSIEDKMY…LFQVGSYANE (605 aa)) lie on the Extracellular side of the membrane. N-linked (GlcNAc...) asparagine glycosylation is found at Asn94, Asn172, Asn305, Asn389, Asn451, Asn475, Asn550, Asn553, and Asn600. A helical transmembrane segment spans residues 628-648 (IWFLVSGLIELLLSVGIIFYI). At 649–659 (KKYLSKRYKLL) the chain is on the cytoplasmic side.

This sequence belongs to the nicastrin family. As to quaternary structure, homodimer. Component of the gamma-secretase complex, a complex composed of a presenilin homodimer, nicastrin, aph1 and pen2.

It localises to the membrane. Essential subunit of the gamma-secretase complex, an endoprotease complex that catalyzes the intramembrane cleavage of integral membrane proteins such as Notch receptors and APP (amyloid-beta precursor protein). It probably represents a stabilizing cofactor required for the assembly of the gamma-secretase complex. This is Nicastrin (ncstn) from Dictyostelium discoideum (Social amoeba).